Consider the following 189-residue polypeptide: MAIKLIVGLRNPGSAYEQTRHNAGAWLVTALAQRHNSHFKIDKKMQAELTEIDINNHPCRLALPLTFMNHSGQTTRIISQFYKIEPGEILIVHDELDLPVGRIKLKTGGGHGGHNGLRDITAQLGTGEFHRLRIGIGHPGHKDLVHQYVLSRPSMHDRQQIYDAIDRGIAIIPIVLSGDMARAMNQVNA.

Tyr16 provides a ligand contact to tRNA. Catalysis depends on His21, which acts as the Proton acceptor. TRNA is bound by residues Phe67, Asn69, and Asn115.

This sequence belongs to the PTH family. Monomer.

The protein localises to the cytoplasm. The catalysed reaction is an N-acyl-L-alpha-aminoacyl-tRNA + H2O = an N-acyl-L-amino acid + a tRNA + H(+). Functionally, hydrolyzes ribosome-free peptidyl-tRNAs (with 1 or more amino acids incorporated), which drop off the ribosome during protein synthesis, or as a result of ribosome stalling. Catalyzes the release of premature peptidyl moieties from peptidyl-tRNA molecules trapped in stalled 50S ribosomal subunits, and thus maintains levels of free tRNAs and 50S ribosomes. This Legionella pneumophila (strain Paris) protein is Peptidyl-tRNA hydrolase.